The following is a 568-amino-acid chain: Nitrite reductase (568 aa).

The signal sequence occupies residues 1–25 (MPFGKPLVGTLLASLTLLGLATAHA). Residues 26–54 (KDDMKAAEQYQGAASAVDPAHVVRTNGAP) are N-terminal tail. The Cytochrome c domain occupies 55–140 (DMSESEFNEA…AKYIQHTPPQ (86 aa)). Residues cysteine 72, cysteine 75, histidine 76, arginine 96, threonine 109, and methionine 113 each contribute to the heme c site. The D1-heme domain stretch occupies residues 141-568 (PPEWGMPEMR…NVYNTQHDVY (428 aa)). Positions 207, 250, 251, 270, 397, and 508 each coordinate heme d1.

As to quaternary structure, homodimer. It depends on heme c as a cofactor. Requires heme as cofactor.

Its subcellular location is the periplasm. The catalysed reaction is nitric oxide + Fe(III)-[cytochrome c] + H2O = Fe(II)-[cytochrome c] + nitrite + 2 H(+). The enzyme catalyses A + NH4(+) + H2O = hydroxylamine + AH2 + H(+). This is Nitrite reductase (nirS) from Pseudomonas aeruginosa (strain ATCC 15692 / DSM 22644 / CIP 104116 / JCM 14847 / LMG 12228 / 1C / PRS 101 / PAO1).